The primary structure comprises 122 residues: Large ribosomal subunit protein uL14 (122 aa).

The protein belongs to the universal ribosomal protein uL14 family. In terms of assembly, part of the 50S ribosomal subunit. Forms a cluster with proteins L3 and L19. In the 70S ribosome, L14 and L19 interact and together make contacts with the 16S rRNA in bridges B5 and B8.

Binds to 23S rRNA. Forms part of two intersubunit bridges in the 70S ribosome. In Finegoldia magna (strain ATCC 29328 / DSM 20472 / WAL 2508) (Peptostreptococcus magnus), this protein is Large ribosomal subunit protein uL14.